The primary structure comprises 375 residues: NADH-ubiquinone oxidoreductase 40 kDa subunit, mitochondrial (375 aa).

Residues 1–26 (MAPLTAAMRSTPRIIVSNAFGFQRRA) constitute a mitochondrion transit peptide.

It belongs to the complex I NDUFA9 subunit family. As to quaternary structure, complex I is composed of about 40 different subunits. The cofactor is FAD.

It localises to the mitochondrion matrix. Functionally, accessory subunit of the mitochondrial membrane respiratory chain NADH dehydrogenase (Complex I), that is believed not to be involved in catalysis. Complex I functions in the transfer of electrons from NADH to the respiratory chain. The immediate electron acceptor for the enzyme is believed to be ubiquinone. This is NADH-ubiquinone oxidoreductase 40 kDa subunit, mitochondrial (nuo40) from Neurospora crassa (strain ATCC 24698 / 74-OR23-1A / CBS 708.71 / DSM 1257 / FGSC 987).